The chain runs to 68 residues: MKPSSLTLAFLVVFMMAIMYNSVQAEALADADAEAFAEAGVKELFGKAWGLVKKHLPKACGLLGYVKQ.

Positions 1–25 are cleaved as a signal peptide; it reads MKPSSLTLAFLVVFMMAIMYNSVQA. Residues 26 to 39 constitute a propeptide that is removed on maturation; the sequence is EALADADAEAFAEA.

Belongs to the formicidae venom precursor-01 superfamily. Homo- or heterodimer with PLP7 (AC A0A348G6I9); disulfide-linked. In terms of processing, truncated sequences of this peptide have also been found in the venom. It is possible they have been cleaved in the venom. As to expression, expressed by the venom gland.

It is found in the secreted. This homodimer composed of two cationic amphipathic alpha-helical peptides has antimicrobial activities against E.coli (MIC=3.1 uM), S.aureus (MIC=3.1 uM), and S.cerevisiae (MIC=3.1 uM). It also shows histamine-releasing activity (66.4% at 10 uM) and a weak hemolytic activity (10.5% at 50 uM). This is U-poneritoxin(01)-Om4a from Odontomachus monticola (Trap-jaw ant).